The primary structure comprises 253 residues: Histone H1.4 (253 aa).

Over residues 1-33 the composition is skewed to low complexity; sequence MSDVAVAADTTETPAAPTKASKATKASKATKAS. The disordered stretch occupies residues 1-43; sequence MSDVAVAADTTETPAAPTKASKATKASKATKASKATKAKTTKV. S2 is modified (N-acetylserine). Positions 51-127 constitute an H15 domain; that stretch reads AHPPFINMVT…GANGRFRLAE (77 aa). The interval 134-253 is disordered; it reads KSPAAAKKDA…KKAPAAAPEA (120 aa). 2 stretches are compositionally biased toward basic and acidic residues: residues 139 to 149 and 188 to 200; these read AKKDATGEKKA and AAGD…EVKV. Composition is skewed to basic residues over residues 201–210 and 234–244; these read KKVKSPKKIA and APKKAAAKPAK.

Belongs to the histone H1/H5 family.

It is found in the nucleus. The protein resides in the chromosome. Its function is as follows. Histones H1 are necessary for the condensation of nucleosome chains into higher-order structures. The chain is Histone H1.4 (hil-4) from Caenorhabditis elegans.